The following is a 376-amino-acid chain: Queuine tRNA-ribosyltransferase (376 aa).

Asp89 (proton acceptor) is an active-site residue. Substrate-binding positions include 89-93 (DSGGF), Asp143, Gln194, and Gly221. The segment at 252-258 (GVGTPSN) is RNA binding. The Nucleophile role is filled by Asp271. Positions 276–280 (ARNGR) are RNA binding; important for wobble base 34 recognition. Zn(2+) contacts are provided by Cys309, Cys311, Cys314, and His340.

This sequence belongs to the queuine tRNA-ribosyltransferase family. As to quaternary structure, homodimer. Within each dimer, one monomer is responsible for RNA recognition and catalysis, while the other monomer binds to the replacement base PreQ1. Requires Zn(2+) as cofactor.

It carries out the reaction 7-aminomethyl-7-carbaguanine + guanosine(34) in tRNA = 7-aminomethyl-7-carbaguanosine(34) in tRNA + guanine. It functions in the pathway tRNA modification; tRNA-queuosine biosynthesis. Functionally, catalyzes the base-exchange of a guanine (G) residue with the queuine precursor 7-aminomethyl-7-deazaguanine (PreQ1) at position 34 (anticodon wobble position) in tRNAs with GU(N) anticodons (tRNA-Asp, -Asn, -His and -Tyr). Catalysis occurs through a double-displacement mechanism. The nucleophile active site attacks the C1' of nucleotide 34 to detach the guanine base from the RNA, forming a covalent enzyme-RNA intermediate. The proton acceptor active site deprotonates the incoming PreQ1, allowing a nucleophilic attack on the C1' of the ribose to form the product. After dissociation, two additional enzymatic reactions on the tRNA convert PreQ1 to queuine (Q), resulting in the hypermodified nucleoside queuosine (7-(((4,5-cis-dihydroxy-2-cyclopenten-1-yl)amino)methyl)-7-deazaguanosine). The chain is Queuine tRNA-ribosyltransferase from Clostridium acetobutylicum (strain ATCC 824 / DSM 792 / JCM 1419 / IAM 19013 / LMG 5710 / NBRC 13948 / NRRL B-527 / VKM B-1787 / 2291 / W).